A 111-amino-acid polypeptide reads, in one-letter code: Iron-sulfur cluster insertion protein ErpA (111 aa).

Residues cysteine 39, cysteine 103, and cysteine 105 each coordinate iron-sulfur cluster.

This sequence belongs to the HesB/IscA family. Homodimer. Requires iron-sulfur cluster as cofactor.

Its function is as follows. Required for insertion of 4Fe-4S clusters for at least IspG. The sequence is that of Iron-sulfur cluster insertion protein ErpA from Acinetobacter baumannii (strain SDF).